The primary structure comprises 248 residues: UPF0246 protein RPR_00055 (248 aa).

The protein belongs to the UPF0246 family.

The polypeptide is UPF0246 protein RPR_00055 (Rickettsia peacockii (strain Rustic)).